Here is a 598-residue protein sequence, read N- to C-terminus: Peroxisomal targeting signal receptor (598 aa).

Disordered stretches follow at residues 1-54 (MSFM…GEMS), 135-154 (RGGS…MQGG), and 208-237 (AVGK…TTTE). Positions 9–22 (ECSTGRNPLSQFTK) are enriched in polar residues. A Glycyl cysteine thioester (Cys-Gly) (interchain with G-Cter in ubiquitin) cross-link involves residue cysteine 10. A Glycyl lysine isopeptide (Lys-Gly) (interchain with G-Cter in ubiquitin) cross-link involves residue lysine 22. The segment covering 23 to 35 (HTAEDRSLQHDRV) has biased composition (basic and acidic residues). The segment covering 220–233 (AETATATETVTETE) has biased composition (low complexity). TPR repeat units lie at residues 304 to 337 (PDPF…NTEH), 338 to 371 (AEAW…EPGN), 372 to 409 (LSAL…VVDQ), 410 to 447 (ARNQ…ANID), 448 to 481 (ADVQ…RPDD), 482 to 515 (ALLW…RPSF), and 516 to 549 (VRAR…HKVE).

Belongs to the peroxisomal targeting signal receptor family. Ubiquitination at Cys-10 is UBC4-independent but requires the presence of PEX4. Ubiquitination at Lys-22 is UBC4-dependent.

It is found in the cytoplasm. Its subcellular location is the peroxisome membrane. In terms of biological role, binds to the C-terminal PTS1-type tripeptide peroxisomal targeting signal (SKL-type) and plays an essential role in peroxisomal protein import. The sequence is that of Peroxisomal targeting signal receptor (PAY32) from Yarrowia lipolytica (strain CLIB 122 / E 150) (Yeast).